The chain runs to 592 residues: Protein alan shepard (592 aa).

A disordered region spans residues 1–68 (MGGPHHQHQQ…ASVAAAPPTP (68 aa)). The span at 18–28 (VGGGNGHGGGA) shows a compositional bias: gly residues. A compositionally biased stretch (polar residues) spans 36-54 (PNSQQLPPQMPRSQNYANG). The span at 55–64 (SSSAASVAAA) shows a compositional bias: low complexity. 2 positions are modified to phosphotyrosine: Tyr124 and Tyr140. The segment at 162–224 (PATTTYGQRV…AQNQNQQGGE (63 aa)) is disordered. Residues 176–224 (SPSNTNSSSSSNTGSQSGTLSTSLSNTTNTNTTMGPNGTAQNQNQQGGE) show a composition bias toward low complexity. 2 consecutive RRM domains span residues 229-307 (TNLY…IWVL) and 319-398 (TNLY…FADG). The tract at residues 565–592 (PMTDSEQASTAASPDEAYTQYPHQAAPK) is disordered.

Its function is as follows. Has a role in the perception of gravity. This Drosophila mojavensis (Fruit fly) protein is Protein alan shepard.